The following is a 122-amino-acid chain: Large ribosomal subunit protein uL22c (122 aa).

Belongs to the universal ribosomal protein uL22 family. In terms of assembly, part of the 50S ribosomal subunit.

It localises to the plastid. The protein localises to the chloroplast. Functionally, this protein binds specifically to 23S rRNA. The globular domain of the protein is located near the polypeptide exit tunnel on the outside of the subunit, while an extended beta-hairpin is found that lines the wall of the exit tunnel in the center of the 70S ribosome. The protein is Large ribosomal subunit protein uL22c (rpl22) of Adiantum capillus-veneris (Maidenhair fern).